Here is an 87-residue protein sequence, read N- to C-terminus: Phosphoribosyl-ATP pyrophosphatase (87 aa).

Belongs to the PRA-PH family.

The protein resides in the cytoplasm. The catalysed reaction is 1-(5-phospho-beta-D-ribosyl)-ATP + H2O = 1-(5-phospho-beta-D-ribosyl)-5'-AMP + diphosphate + H(+). Its pathway is amino-acid biosynthesis; L-histidine biosynthesis; L-histidine from 5-phospho-alpha-D-ribose 1-diphosphate: step 2/9. This is Phosphoribosyl-ATP pyrophosphatase from Pseudarthrobacter chlorophenolicus (strain ATCC 700700 / DSM 12829 / CIP 107037 / JCM 12360 / KCTC 9906 / NCIMB 13794 / A6) (Arthrobacter chlorophenolicus).